The sequence spans 255 residues: MGAMAENLLVLCTILAARMALAAADDWIPATATFYGGNDGSGTMGGACGYGNLYDQGYGLENAALSTALFNDGAACGQCYLIVCDTDKAGRWCKPRGAVTVTATNLCPPNWALPSDGGGWCNPPRRHFDMSQPAWERIGVYRAGIVPVLYRRVRCWRRGGVRFTVGGFDHFELVLVANVAGSGSVAAVSVRGAGTGWLQMSRNWGANWQSLAGLAGQPLSFGVTTTGGQYILFQDVAPAGWKFGQTFSTSKQFDY.

An N-terminal signal peptide occupies residues 1–24 (MGAMAENLLVLCTILAARMALAAA). Residues 45–160 (GGACGYGNLY…RRVRCWRRGG (116 aa)) form the Expansin-like EG45 domain. The 80-residue stretch at 170 to 249 (HFELVLVANV…GWKFGQTFST (80 aa)) folds into the Expansin-like CBD domain.

This sequence belongs to the expansin family. Expansin A subfamily.

Its subcellular location is the secreted. The protein resides in the cell wall. The protein localises to the membrane. May cause loosening and extension of plant cell walls by disrupting non-covalent bonding between cellulose microfibrils and matrix glucans. No enzymatic activity has been found. May be required for rapid internodal elongation in deepwater rice during submergence. In Oryza sativa subsp. japonica (Rice), this protein is Putative expansin-A27 (EXPA27).